A 355-amino-acid polypeptide reads, in one-letter code: Polyferredoxin protein FwdF (355 aa).

4Fe-4S ferredoxin-type domains follow at residues 24 to 53 (RELCWNDELCVGCGICADICPVNAIAMGPL), 64 to 93 (PKLDIDKDVCVLCGMCASACPFDALDLKIN), 108 to 137 (RDIKVYQDKCVLCEQCEMVCPQGAIVVERE), 147 to 176 (GEININKEKCVLCGICAEYCPADAINLKYN), 187 to 216 (TDIEVDKDKCVFCKVCEFVCPHDAIEVICY), 235 to 264 (GKTVIDKDACVTCGWCAFICPAEAIEVEKP), 267 to 296 (GELIIDVNACNACGACISICPCSALEFPKP), and 304 to 333 (PRIIVNQNLCVLCGACAKACPVNAIKVKRT). The [4Fe-4S] cluster site is built by Cys33, Cys36, Cys39, Cys43, Cys73, Cys76, Cys79, Cys83, Cys117, Cys120, Cys123, Cys127, Cys156, Cys159, Cys162, Cys166, Cys196, Cys199, Cys202, Cys206, Cys244, Cys247, Cys250, Cys254, Cys276, Cys279, Cys282, Cys286, Cys313, Cys316, Cys319, and Cys323.

[4Fe-4S] cluster is required as a cofactor.

This Methanocaldococcus jannaschii (strain ATCC 43067 / DSM 2661 / JAL-1 / JCM 10045 / NBRC 100440) (Methanococcus jannaschii) protein is Polyferredoxin protein FwdF (fwdF).